A 101-amino-acid chain; its full sequence is Protein Tat (101 aa).

An interaction with human CREBBP region spans residues 1–24 (MEPVDPNREPWNHPGSQPKTACTN). Positions 1–48 (MEPVDPNREPWNHPGSQPKTACTNCYCKKCCYHCQVCFLQKGLGISYG) are transactivation. Cys22, Cys25, and Cys27 together coordinate Zn(2+). Residues 22 to 37 (CTNCYCKKCCYHCQVC) form a cysteine-rich region. An N6-acetyllysine; by host PCAF modification is found at Lys28. The Zn(2+) site is built by Cys30, His33, Cys34, and Cys37. The tract at residues 38-48 (FLQKGLGISYG) is core. Positions 48 to 101 (GRKKRRQRRSAPPGSKNHQDLIPEQPLFQTQRKPTGPEESKKEVESKAEPDRFD) are disordered. The Nuclear localization signal, RNA-binding (TAR), and protein transduction signature appears at 49–57 (RKKRRQRRS). The segment at 49–86 (RKKRRQRRSAPPGSKNHQDLIPEQPLFQTQRKPTGPEE) is interaction with the host capping enzyme RNGTT. Lys50 and Lys51 each carry N6-acetyllysine; by host EP300 and GCN5L2. Arg52 and Arg53 each carry asymmetric dimethylarginine; by host PRMT6. Residues 82–101 (TGPEESKKEVESKAEPDRFD) are compositionally biased toward basic and acidic residues.

Belongs to the lentiviruses Tat family. As to quaternary structure, interacts with host CCNT1. Associates with the P-TEFb complex composed at least of Tat, P-TEFb (CDK9 and CCNT1), TAR RNA, RNA Pol II. Recruits the HATs CREBBP, TAF1/TFIID, EP300, PCAF and GCN5L2. Interacts with host KAT5/Tip60; this interaction targets the latter to degradation. Interacts with the host deacetylase SIRT1. Interacts with host capping enzyme RNGTT; this interaction stimulates RNGTT. Binds to host KDR, and to the host integrins ITGAV/ITGB3 and ITGA5/ITGB1. Interacts with host KPNB1/importin beta-1 without previous binding to KPNA1/importin alpha-1. Interacts with EIF2AK2. Interacts with host nucleosome assembly protein NAP1L1; this interaction may be required for the transport of Tat within the nucleus, since the two proteins interact at the nuclear rim. Interacts with host C1QBP/SF2P32; this interaction involves lysine-acetylated Tat. Interacts with the host chemokine receptors CCR2, CCR3 and CXCR4. Interacts with host DPP4/CD26; this interaction may trigger an anti-proliferative effect. Interacts with host LDLR. Interacts with the host extracellular matrix metalloproteinase MMP1. Interacts with host PRMT6; this interaction mediates Tat's methylation. Interacts with, and is ubiquitinated by MDM2/Hdm2. Interacts with host PSMC3 and HTATIP2. Interacts with STAB1; this interaction may overcome SATB1-mediated repression of IL2 and IL2RA (interleukin) in T cells by binding to the same domain than HDAC1. Interacts (when acetylated) with human CDK13, thereby increasing HIV-1 mRNA splicing and promoting the production of the doubly spliced HIV-1 protein Nef. Interacts with host TBP; this interaction modulates the activity of transcriptional pre-initiation complex. Interacts with host RELA. Interacts with host PLSCR1; this interaction negatively regulates Tat transactivation activity by altering its subcellular distribution. In terms of processing, asymmetrical arginine methylation by host PRMT6 seems to diminish the transactivation capacity of Tat and affects the interaction with host CCNT1. Acetylation by EP300, CREBBP, GCN5L2/GCN5 and PCAF regulates the transactivation activity of Tat. EP300-mediated acetylation of Lys-50 promotes dissociation of Tat from the TAR RNA through the competitive binding to PCAF's bromodomain. In addition, the non-acetylated Tat's N-terminus can also interact with PCAF. PCAF-mediated acetylation of Lys-28 enhances Tat's binding to CCNT1. Lys-50 is deacetylated by SIRT1. Post-translationally, polyubiquitination by host MDM2 does not target Tat to degradation, but activates its transactivation function and fosters interaction with CCNT1 and TAR RNA. In terms of processing, phosphorylated by EIF2AK2 on serine and threonine residues adjacent to the basic region important for TAR RNA binding and function. Phosphorylation of Tat by EIF2AK2 is dependent on the prior activation of EIF2AK2 by dsRNA.

The protein localises to the host nucleus. The protein resides in the host nucleolus. It is found in the host cytoplasm. Its subcellular location is the secreted. In terms of biological role, transcriptional activator that increases RNA Pol II processivity, thereby increasing the level of full-length viral transcripts. Recognizes a hairpin structure at the 5'-LTR of the nascent viral mRNAs referred to as the transactivation responsive RNA element (TAR) and recruits the cyclin T1-CDK9 complex (P-TEFb complex) that will in turn hyperphosphorylate the RNA polymerase II to allow efficient elongation. The CDK9 component of P-TEFb and other Tat-activated kinases hyperphosphorylate the C-terminus of RNA Pol II that becomes stabilized and much more processive. Other factors such as HTATSF1/Tat-SF1, SUPT5H/SPT5, and HTATIP2 are also important for Tat's function. Besides its effect on RNA Pol II processivity, Tat induces chromatin remodeling of proviral genes by recruiting the histone acetyltransferases (HATs) CREBBP, EP300 and PCAF to the chromatin. This also contributes to the increase in proviral transcription rate, especially when the provirus integrates in transcriptionally silent region of the host genome. To ensure maximal activation of the LTR, Tat mediates nuclear translocation of NF-kappa-B by interacting with host RELA. Through its interaction with host TBP, Tat may also modulate transcription initiation. Tat can reactivate a latently infected cell by penetrating in it and transactivating its LTR promoter. In the cytoplasm, Tat is thought to act as a translational activator of HIV-1 mRNAs. Its function is as follows. Extracellular circulating Tat can be endocytosed by surrounding uninfected cells via the binding to several surface receptors such as CD26, CXCR4, heparan sulfate proteoglycans (HSPG) or LDLR. Neurons are rarely infected, but they internalize Tat via their LDLR. Through its interaction with nuclear HATs, Tat is potentially able to control the acetylation-dependent cellular gene expression. Modulates the expression of many cellular genes involved in cell survival, proliferation or in coding for cytokines or cytokine receptors. Tat plays a role in T-cell and neurons apoptosis. Tat induced neurotoxicity and apoptosis probably contribute to neuroAIDS. Circulating Tat also acts as a chemokine-like and/or growth factor-like molecule that binds to specific receptors on the surface of the cells, affecting many cellular pathways. In the vascular system, Tat binds to ITGAV/ITGB3 and ITGA5/ITGB1 integrins dimers at the surface of endothelial cells and competes with bFGF for heparin-binding sites, leading to an excess of soluble bFGF. In Human immunodeficiency virus type 1 group M subtype J (isolate SE9173) (HIV-1), this protein is Protein Tat.